The sequence spans 298 residues: MSDASRISPLDQARILSEALPHMQQYDEETIVIKYGGHAMGAEDVARQFARDIVLLEQTAINPVVVHGGGPQIATMLQRLGIKSEFAAGLRITDAATIEIVEMVLAGSINKQLVGYINEAGGKAVGLCGKDGNMVTASKATRTIADPDSNIEKVVDLGFVGEPEKVDLTLLNQLIGHELIPVLAPLATSKGGQTFNVNADTFAGAVAGALKAKRLLLLTDVPGVLDKSKKLIPDLSIGDARKLIADGTISGGMIPKVETCIYALEQGVGGVVIIDGKTPHAVLLELFTDQGTGTLIHK.

Substrate contacts are provided by residues Gly69–Gly70, Arg91, and Asn196.

It belongs to the acetylglutamate kinase family. ArgB subfamily.

Its subcellular location is the cytoplasm. It carries out the reaction N-acetyl-L-glutamate + ATP = N-acetyl-L-glutamyl 5-phosphate + ADP. Its pathway is amino-acid biosynthesis; L-arginine biosynthesis; N(2)-acetyl-L-ornithine from L-glutamate: step 2/4. Catalyzes the ATP-dependent phosphorylation of N-acetyl-L-glutamate. This chain is Acetylglutamate kinase, found in Nitrobacter hamburgensis (strain DSM 10229 / NCIMB 13809 / X14).